Here is a 160-residue protein sequence, read N- to C-terminus: 6,7-dimethyl-8-ribityllumazine synthase (160 aa).

5-amino-6-(D-ribitylamino)uracil is bound by residues W27, 59 to 61 (AIE), and 81 to 83 (VVI). Residue 86-87 (DT) participates in (2S)-2-hydroxy-3-oxobutyl phosphate binding. H89 functions as the Proton donor in the catalytic mechanism. Residue N114 participates in 5-amino-6-(D-ribitylamino)uracil binding. R128 contributes to the (2S)-2-hydroxy-3-oxobutyl phosphate binding site.

It belongs to the DMRL synthase family. In terms of assembly, homopentamer.

It carries out the reaction (2S)-2-hydroxy-3-oxobutyl phosphate + 5-amino-6-(D-ribitylamino)uracil = 6,7-dimethyl-8-(1-D-ribityl)lumazine + phosphate + 2 H2O + H(+). It functions in the pathway cofactor biosynthesis; riboflavin biosynthesis; riboflavin from 2-hydroxy-3-oxobutyl phosphate and 5-amino-6-(D-ribitylamino)uracil: step 1/2. In terms of biological role, catalyzes the formation of 6,7-dimethyl-8-ribityllumazine by condensation of 5-amino-6-(D-ribitylamino)uracil with 3,4-dihydroxy-2-butanone 4-phosphate. This is the penultimate step in the biosynthesis of riboflavin. This chain is 6,7-dimethyl-8-ribityllumazine synthase, found in Mycobacterium leprae (strain Br4923).